A 215-amino-acid chain; its full sequence is Putative serine/threonine-protein kinase YrzF (215 aa).

The region spanning Ser27 to Ser215 is the Protein kinase domain. ATP-binding positions include Ile33 to Val41 and Lys54. The active-site Proton acceptor is the Asp135.

The protein belongs to the protein kinase superfamily. Ser/Thr protein kinase family.

The enzyme catalyses L-seryl-[protein] + ATP = O-phospho-L-seryl-[protein] + ADP + H(+). The catalysed reaction is L-threonyl-[protein] + ATP = O-phospho-L-threonyl-[protein] + ADP + H(+). The protein is Putative serine/threonine-protein kinase YrzF (yrzF) of Bacillus subtilis (strain 168).